The following is a 70-amino-acid chain: MASIKHFFLVFICVSVLLTSGLADYKFHVCDPSFDEKDCDFECKEFGHPGGYCRPDRVQPRIRMCYCTDR.

Residues 1–23 form the signal peptide; sequence MASIKHFFLVFICVSVLLTSGLA. 3 disulfide bridges follow: Cys30/Cys53, Cys39/Cys65, and Cys43/Cys67.

The protein belongs to the DEFL family.

It localises to the secreted. In Arabidopsis thaliana (Mouse-ear cress), this protein is Putative defensin-like protein 280.